A 697-amino-acid polypeptide reads, in one-letter code: Long-chain-fatty-acid--CoA ligase 6 (697 aa).

A helical; Signal-anchor for type III membrane protein membrane pass occupies residues 25-45 (LSATTLVSVGALAAVLAYWLT). The Cytoplasmic segment spans residues 46–697 (HRPKALQPPC…QIEELYLVSV (652 aa)).

The protein belongs to the ATP-dependent AMP-binding enzyme family. Mg(2+) serves as cofactor.

The protein localises to the mitochondrion outer membrane. Its subcellular location is the peroxisome membrane. It is found in the microsome membrane. It localises to the endoplasmic reticulum membrane. The catalysed reaction is a long-chain fatty acid + ATP + CoA = a long-chain fatty acyl-CoA + AMP + diphosphate. It carries out the reaction (5Z,8Z,11Z,14Z)-eicosatetraenoate + ATP + CoA = (5Z,8Z,11Z,14Z)-eicosatetraenoyl-CoA + AMP + diphosphate. It catalyses the reaction 15-hydroxy-(5Z,8Z,11Z,13E)-eicosatetraenoate + ATP + CoA = 15-hydroxy-(5Z,8Z,11Z,13E)-eicosatetraenoyl-CoA + AMP + diphosphate. The enzyme catalyses 12-hydroxy-(5Z,8Z,10E,14Z)-eicosatetraenoate + ATP + CoA = 12-hydroxy-(5Z,8Z,10E,14Z)-eicosatetraenoyl-CoA + AMP + diphosphate. The catalysed reaction is 5-hydroxy-(6E,8Z,11Z,14Z)-eicosatetraenoate + ATP + CoA = 5-hydroxy-(6E,8Z,11Z,14Z)-eicosatetraenoyl-CoA + AMP + diphosphate. It carries out the reaction hexadecanoate + ATP + CoA = hexadecanoyl-CoA + AMP + diphosphate. It catalyses the reaction (E)-hexadec-2-enoate + ATP + CoA = (2E)-hexadecenoyl-CoA + AMP + diphosphate. In terms of biological role, catalyzes the conversion of long-chain fatty acids to their active form acyl-CoA for both synthesis of cellular lipids, and degradation via beta-oxidation. Plays an important role in fatty acid metabolism in brain and the acyl-CoAs produced may be utilized exclusively for the synthesis of the brain lipid. The chain is Long-chain-fatty-acid--CoA ligase 6 (Acsl6) from Mus musculus (Mouse).